Consider the following 290-residue polypeptide: Inositol monophosphatase 2 (290 aa).

Mg(2+) contacts are provided by Glu-83, Asp-103, Ile-105, and Asp-106. Glu-83 is a binding site for substrate. Residues 105 to 108, 207 to 209, Gln-226, and Asp-233 contribute to the substrate site; these read IDGT and GSS. Asp-233 contributes to the Mg(2+) binding site.

This sequence belongs to the inositol monophosphatase superfamily. As to quaternary structure, homodimer. Mg(2+) is required as a cofactor. In terms of tissue distribution, mostly expressed in brain, small intestine, heart, kidney, and spleen (at protein level).

The protein resides in the cytoplasm. It catalyses the reaction a myo-inositol phosphate + H2O = myo-inositol + phosphate. The enzyme catalyses 1D-myo-inositol 1-phosphate + H2O = myo-inositol + phosphate. It carries out the reaction 1D-myo-inositol 2-phosphate + H2O = myo-inositol + phosphate. The catalysed reaction is 1D-myo-inositol 3-phosphate + H2O = myo-inositol + phosphate. It catalyses the reaction 1D-myo-inositol 4-phosphate + H2O = myo-inositol + phosphate. The enzyme catalyses 1D-myo-inositol 5-phosphate + H2O = myo-inositol + phosphate. It carries out the reaction 1D-myo-inositol 6-phosphate + H2O = myo-inositol + phosphate. The catalysed reaction is alpha-D-glucose 1-phosphate + H2O = D-glucose + phosphate. It catalyses the reaction glycerol 2-phosphate + H2O = glycerol + phosphate. The enzyme catalyses adenosine 2'-phosphate + H2O = adenosine + phosphate. Its pathway is polyol metabolism; myo-inositol biosynthesis; myo-inositol from D-glucose 6-phosphate: step 2/2. Phosphatase that can use myo-inositol monophosphates, myo-inositol 1,4-diphosphate, scyllo-inositol-1,4-diphosphate, glucose-1-phosphate, beta-glycerophosphate and 2'-AMP as substrates in vitro. No physiological substrates has been described yet. Has been implicated as the pharmacological target for lithium Li(+) action in brain. This chain is Inositol monophosphatase 2, found in Mus musculus (Mouse).